We begin with the raw amino-acid sequence, 172 residues long: Methylated-DNA--protein-cysteine methyltransferase (172 aa).

Cysteine 142 (nucleophile; methyl group acceptor) is an active-site residue.

This sequence belongs to the MGMT family.

It is found in the cytoplasm. The enzyme catalyses a 6-O-methyl-2'-deoxyguanosine in DNA + L-cysteinyl-[protein] = S-methyl-L-cysteinyl-[protein] + a 2'-deoxyguanosine in DNA. It catalyses the reaction a 4-O-methyl-thymidine in DNA + L-cysteinyl-[protein] = a thymidine in DNA + S-methyl-L-cysteinyl-[protein]. Its function is as follows. Involved in the cellular defense against the biological effects of O6-methylguanine (O6-MeG) and O4-methylthymine (O4-MeT) in DNA. Repairs the methylated nucleobase in DNA by stoichiometrically transferring the methyl group to a cysteine residue in the enzyme. This is a suicide reaction: the enzyme is irreversibly inactivated. The chain is Methylated-DNA--protein-cysteine methyltransferase from Pyrococcus abyssi (strain GE5 / Orsay).